We begin with the raw amino-acid sequence, 133 residues long: Putative biopolymer transport protein ExbD-like 1 (133 aa).

Residues 1 to 15 (MNYDNYWDEDKPELN) lie on the Cytoplasmic side of the membrane. Residues 16-32 (ITPLVDVMLVLLAILMV) traverse the membrane as a helical segment. Residues 33-133 (TTPTLTYKEE…FLKVSLITSP (101 aa)) lie on the Periplasmic side of the membrane.

It belongs to the ExbD/TolR family.

The protein localises to the cell inner membrane. The polypeptide is Putative biopolymer transport protein ExbD-like 1 (Helicobacter pylori (strain ATCC 700392 / 26695) (Campylobacter pylori)).